Consider the following 139-residue polypeptide: Nucleoside diphosphate kinase (139 aa).

The ATP site is built by lysine 10, phenylalanine 58, arginine 86, threonine 92, arginine 104, and asparagine 114. Residue histidine 117 is the Pros-phosphohistidine intermediate of the active site.

Belongs to the NDK family. In terms of assembly, homotetramer. Mg(2+) serves as cofactor.

The protein resides in the cytoplasm. It catalyses the reaction a 2'-deoxyribonucleoside 5'-diphosphate + ATP = a 2'-deoxyribonucleoside 5'-triphosphate + ADP. The enzyme catalyses a ribonucleoside 5'-diphosphate + ATP = a ribonucleoside 5'-triphosphate + ADP. In terms of biological role, major role in the synthesis of nucleoside triphosphates other than ATP. The ATP gamma phosphate is transferred to the NDP beta phosphate via a ping-pong mechanism, using a phosphorylated active-site intermediate. The chain is Nucleoside diphosphate kinase from Rhodococcus erythropolis (strain PR4 / NBRC 100887).